A 381-amino-acid polypeptide reads, in one-letter code: MSCFSCFSSKVLDNEGSSMPAPYKQPNSPKRTTGEVVAKNANGPSNNMGARIFTFRELATATKNFRQECLIGEGGFGRVYKGKLENPAQVVAVKQLDRNGLQGQREFLVEVLMLSLLHHRNLVNLIGYCADGDQRLLVYEYMPLGSLEDHLLDLEPGQKPLDWNTRIKIALGAAKGIEYLHDEADPPVIYRDLKSSNILLDPEYVAKLSDFGLAKLGPVGDTLHVSSRVMGTYGYCAPEYQRTGYLTNKSDVYSFGVVLLELISGRRVIDTMRPSHEQNLVTWALPIFRDPTRYWQLADPLLRGDYPEKSLNQAIAVAAMCLHEEPTVRPLMSDVITALSFLGASSNSSNTGSNHLQQNRSNKYQDAVQWDSSPRYANSQM.

A lipid anchor (S-palmitoyl cysteine) is attached at cysteine 3. Residues 16–41 (GSSMPAPYKQPNSPKRTTGEVVAKNA) form a disordered region. Threonine 54 bears the Phosphothreonine mark. Positions 65–342 (FRQECLIGEG…SDVITALSFL (278 aa)) constitute a Protein kinase domain. Residues 71-79 (IGEGGFGRV) and lysine 94 each bind ATP. Tyrosine 139 carries the post-translational modification Phosphotyrosine. Aspartate 192 serves as the catalytic Proton acceptor. 2 positions are modified to phosphoserine: serine 196 and serine 226. Phosphothreonine is present on threonine 232. Tyrosine 240 bears the Phosphotyrosine mark. The tract at residues 347–381 (NSSNTGSNHLQQNRSNKYQDAVQWDSSPRYANSQM) is disordered. The span at 355-381 (HLQQNRSNKYQDAVQWDSSPRYANSQM) shows a compositional bias: polar residues.

Belongs to the protein kinase superfamily. Ser/Thr protein kinase family.

It localises to the cell membrane. It carries out the reaction L-seryl-[protein] + ATP = O-phospho-L-seryl-[protein] + ADP + H(+). It catalyses the reaction L-threonyl-[protein] + ATP = O-phospho-L-threonyl-[protein] + ADP + H(+). Its function is as follows. May be involved in plant defense signaling. This is Probable serine/threonine-protein kinase PBL25 from Arabidopsis thaliana (Mouse-ear cress).